A 437-amino-acid polypeptide reads, in one-letter code: MPLITNVIARQILDSRGNPTVEVDVLTESSFGRAAVPSGASTGIHEAVELRDGDREVYLGKGVLKAVENVNTVINDALEGMLVTEQTEIDKLLLSLDGTPNKSKLGANALLGVSLACAKAAAEYSGLPLFRYIGGTLANTLPVPMMNVLNGGAHADNNVDFQEFMIMPIGFSSYSDALRCGAEVFHALKALLKSKGLSTAVGDEGGFAPDLASNEEAIELVIEAVGKAGYKAGSPTNAGGLGDAHVMIALDPASSEFYDTDKKKYIFKKSSGQELDSAEMASYWENWAGKYPIISIEDGMAEDDWEGWKILTDKIGSRVQLVGDDLFVTNSIRLADGIERKVGNSILIKVNQIGTLTETLQAIDLAKRNGYTSVISHRSGETEDSTIAQIAVATNAGQIKTGSLSRSDRMAKYNELLRIEEELGDEACYPGIRAFRV.

Position 162 (Gln-162) interacts with (2R)-2-phosphoglycerate. The active-site Proton donor is the Glu-204. The Mg(2+) site is built by Asp-251, Glu-297, and Asp-324. The (2R)-2-phosphoglycerate site is built by Lys-349, Arg-378, Ser-379, and Lys-400. Lys-349 functions as the Proton acceptor in the catalytic mechanism.

This sequence belongs to the enolase family. The cofactor is Mg(2+).

The protein localises to the cytoplasm. The protein resides in the secreted. Its subcellular location is the cell surface. The enzyme catalyses (2R)-2-phosphoglycerate = phosphoenolpyruvate + H2O. It functions in the pathway carbohydrate degradation; glycolysis; pyruvate from D-glyceraldehyde 3-phosphate: step 4/5. Functionally, catalyzes the reversible conversion of 2-phosphoglycerate (2-PG) into phosphoenolpyruvate (PEP). It is essential for the degradation of carbohydrates via glycolysis. This chain is Enolase, found in Prosthecochloris aestuarii (strain DSM 271 / SK 413).